The sequence spans 217 residues: Guanylate kinase (217 aa).

Residues 10–190 enclose the Guanylate kinase-like domain; the sequence is GLLIILSSPS…TEEALKTIIT (181 aa). ATP is bound at residue 17–24; sequence SPSGAGKS.

Belongs to the guanylate kinase family.

It is found in the cytoplasm. It carries out the reaction GMP + ATP = GDP + ADP. In terms of biological role, essential for recycling GMP and indirectly, cGMP. This chain is Guanylate kinase, found in Ruegeria sp. (strain TM1040) (Silicibacter sp.).